A 343-amino-acid chain; its full sequence is Cathepsin Q (343 aa).

A signal peptide spans 1–20 (MTPAVFLVILCLGVVPGASA). The propeptide at 21–124 (LDLSLDVQWQ…FPNSWNWRDA (104 aa)) is activation peptide. 2 disulfides stabilise this stretch: C146–C189 and C180–C222. C149 is a catalytic residue. Residue N228 is glycosylated (N-linked (GlcNAc...) asparagine). C280 and C332 are joined by a disulfide. H286 is an active-site residue. N298 carries N-linked (GlcNAc...) asparagine glycosylation. The active site involves N310.

The protein belongs to the peptidase C1 family. As to expression, highly expressed in placenta.

It localises to the lysosome. The sequence is that of Cathepsin Q (Ctsq) from Rattus norvegicus (Rat).